Reading from the N-terminus, the 466-residue chain is Argininosuccinate lyase (466 aa).

Belongs to the lyase 1 family. Argininosuccinate lyase subfamily.

Its subcellular location is the cytoplasm. It carries out the reaction 2-(N(omega)-L-arginino)succinate = fumarate + L-arginine. Its pathway is amino-acid biosynthesis; L-arginine biosynthesis; L-arginine from L-ornithine and carbamoyl phosphate: step 3/3. In Methylocella silvestris (strain DSM 15510 / CIP 108128 / LMG 27833 / NCIMB 13906 / BL2), this protein is Argininosuccinate lyase.